The chain runs to 106 residues: MTYIIYAFAAVFEIGGCFAFWAWLKLGKPVWWLAPGMVSLALFAWLLTLVPSEAAGRTFAAYGGIYIAASLLWLWLVENRVPDRYDIGGALVCLAGTSIILFGPRG.

The next 4 membrane-spanning stretches (helical) occupy residues 4–24, 30–50, 58–78, and 86–106; these read IIYAFAAVFEIGGCFAFWAWL, VWWLAPGMVSLALFAWLLTLV, TFAAYGGIYIAASLLWLWLVE, and DIGGALVCLAGTSIILFGPRG.

The protein belongs to the UPF0060 family.

It is found in the cell inner membrane. This Rhizobium leguminosarum bv. trifolii (strain WSM2304) protein is UPF0060 membrane protein Rleg2_1018.